A 695-amino-acid polypeptide reads, in one-letter code: Spermidine/spermine N(1)-acetyltransferase-like protein 1 (695 aa).

Polar residues-rich tracts occupy residues 1 to 39 (MNQS…QGSA), 52 to 68 (PSMS…NLPD), and 78 to 98 (DTWQ…SQLV). 4 disordered regions span residues 1–274 (MNQS…MNQM), 290–332 (DMKQ…PGMW), 344–375 (ASIS…NQSG), and 387–493 (RQSG…GLSQ). Positions 105–122 (SQPDPSQPGPSQSGPSQS) are enriched in low complexity. Polar residues-rich tracts occupy residues 123 to 179 (RMRQ…TGLS), 197 to 208 (GVQQPGISQQVP), 231 to 266 (PDTS…QPSP), 294 to 310 (PSMS…NLPD), 355 to 375 (APSQ…NQSG), 389 to 422 (SGGS…TGLS), and 459 to 471 (PGTS…QTGM). The region spanning 529-695 (FQIRHAEAGD…EELLDMAWEE (167 aa)) is the N-acetyltransferase domain. 552 to 553 (CE) is a binding site for substrate. Acetyl-CoA-binding positions include 618–620 (FYV) and 626–631 (GLGIGA). Substrate contacts are provided by residues 650–652 (HFL) and Glu676.

This sequence belongs to the acetyltransferase family.

This Homo sapiens (Human) protein is Spermidine/spermine N(1)-acetyltransferase-like protein 1 (SATL1).